The chain runs to 385 residues: S-adenosylmethionine synthase (385 aa).

His-16 contacts ATP. Asp-18 is a binding site for Mg(2+). Residue Glu-44 coordinates K(+). Glu-57 and Gln-100 together coordinate L-methionine. The segment at 100–110 is flexible loop; the sequence is QSPDINQGVDR. Residues 164–166, 230–231, Asp-239, 245–246, Ala-262, and Lys-266 contribute to the ATP site; these read DGK, KF, and RK. Asp-239 contributes to the L-methionine binding site. Residue Lys-270 coordinates L-methionine.

Belongs to the AdoMet synthase family. As to quaternary structure, homotetramer; dimer of dimers. Mg(2+) is required as a cofactor. The cofactor is K(+).

Its subcellular location is the cytoplasm. It carries out the reaction L-methionine + ATP + H2O = S-adenosyl-L-methionine + phosphate + diphosphate. It functions in the pathway amino-acid biosynthesis; S-adenosyl-L-methionine biosynthesis; S-adenosyl-L-methionine from L-methionine: step 1/1. In terms of biological role, catalyzes the formation of S-adenosylmethionine (AdoMet) from methionine and ATP. The overall synthetic reaction is composed of two sequential steps, AdoMet formation and the subsequent tripolyphosphate hydrolysis which occurs prior to release of AdoMet from the enzyme. The sequence is that of S-adenosylmethionine synthase from Helicobacter pylori (strain P12).